The primary structure comprises 203 residues: Recombination protein RecR (203 aa).

The segment at 56 to 71 (CTVCGNVSDDERCRIC) adopts a C4-type zinc-finger fold. The Toprim domain occupies 79–179 (SVVCVVEEPK…TVTRIASGLP (101 aa)).

The protein belongs to the RecR family.

Its function is as follows. May play a role in DNA repair. It seems to be involved in an RecBC-independent recombinational process of DNA repair. It may act with RecF and RecO. This is Recombination protein RecR from Mycobacterium leprae (strain TN).